A 466-amino-acid chain; its full sequence is Argininosuccinate lyase (466 aa).

2-(N(omega)-L-arginino)succinate-binding residues include S27, N114, and T159. H160 (proton acceptor) is an active-site residue. Catalysis depends on S281, which acts as the Proton donor. Positions 289, 321, 326, and 329 each coordinate 2-(N(omega)-L-arginino)succinate.

Belongs to the lyase 1 family. Argininosuccinate lyase subfamily. Homotetramer. In terms of processing, the N-terminus is blocked. As to expression, eye lens.

It carries out the reaction 2-(N(omega)-L-arginino)succinate = fumarate + L-arginine. The protein operates within amino-acid biosynthesis; L-arginine biosynthesis; L-arginine from L-ornithine and carbamoyl phosphate: step 3/3. In terms of biological role, delta crystallin, the principal crystallin in embryonic lens, is found only in birds and reptiles. This protein also functions as an enzymatically active argininosuccinate lyase, but it has a low activity. The polypeptide is Argininosuccinate lyase (ASL) (Columba livia (Rock dove)).